Reading from the N-terminus, the 402-residue chain is Phosphoglycerate kinase (402 aa).

Substrate-binding positions include 24 to 26 (DFN), R40, 63 to 66 (HFGR), R122, and R155. Residues K206, G297, E328, and 357–360 (GGDS) contribute to the ATP site.

This sequence belongs to the phosphoglycerate kinase family. In terms of assembly, monomer.

The protein resides in the cytoplasm. The enzyme catalyses (2R)-3-phosphoglycerate + ATP = (2R)-3-phospho-glyceroyl phosphate + ADP. Its pathway is carbohydrate degradation; glycolysis; pyruvate from D-glyceraldehyde 3-phosphate: step 2/5. The polypeptide is Phosphoglycerate kinase (Synechococcus sp. (strain ATCC 27144 / PCC 6301 / SAUG 1402/1) (Anacystis nidulans)).